The following is a 742-amino-acid chain: Phosphoribosylformylglycinamidine synthase subunit PurL (742 aa).

Histidine 54 is a catalytic residue. 2 residues coordinate ATP: tyrosine 57 and lysine 96. Glutamate 98 provides a ligand contact to Mg(2+). Residues 99–102 (SHNH) and arginine 121 each bind substrate. Histidine 100 serves as the catalytic Proton acceptor. Residue aspartate 122 coordinates Mg(2+). Residue glutamine 245 coordinates substrate. Aspartate 273 is a binding site for Mg(2+). 317–319 (ESQ) is a substrate binding site. Positions 500 and 537 each coordinate ATP. Residue asparagine 538 coordinates Mg(2+). Serine 540 is a substrate binding site.

The protein belongs to the FGAMS family. In terms of assembly, monomer. Part of the FGAM synthase complex composed of 1 PurL, 1 PurQ and 2 PurS subunits.

It is found in the cytoplasm. The enzyme catalyses N(2)-formyl-N(1)-(5-phospho-beta-D-ribosyl)glycinamide + L-glutamine + ATP + H2O = 2-formamido-N(1)-(5-O-phospho-beta-D-ribosyl)acetamidine + L-glutamate + ADP + phosphate + H(+). It functions in the pathway purine metabolism; IMP biosynthesis via de novo pathway; 5-amino-1-(5-phospho-D-ribosyl)imidazole from N(2)-formyl-N(1)-(5-phospho-D-ribosyl)glycinamide: step 1/2. In terms of biological role, part of the phosphoribosylformylglycinamidine synthase complex involved in the purines biosynthetic pathway. Catalyzes the ATP-dependent conversion of formylglycinamide ribonucleotide (FGAR) and glutamine to yield formylglycinamidine ribonucleotide (FGAM) and glutamate. The FGAM synthase complex is composed of three subunits. PurQ produces an ammonia molecule by converting glutamine to glutamate. PurL transfers the ammonia molecule to FGAR to form FGAM in an ATP-dependent manner. PurS interacts with PurQ and PurL and is thought to assist in the transfer of the ammonia molecule from PurQ to PurL. This is Phosphoribosylformylglycinamidine synthase subunit PurL from Geobacillus thermodenitrificans (strain NG80-2).